The chain runs to 309 residues: Dihydroorotate dehydrogenase B (NAD(+)), catalytic subunit (309 aa).

Residues Ser21 and 45 to 46 (KA) each bind FMN. Substrate contacts are provided by residues Lys45 and 69-73 (NAIGL). Positions 99 and 127 each coordinate FMN. Substrate is bound at residue Asn127. The active-site Nucleophile is the Cys130. FMN contacts are provided by Lys165 and Ile191. 192–193 (NT) provides a ligand contact to substrate. Residues Gly217, 243 to 244 (GG), and 265 to 266 (GT) contribute to the FMN site.

The protein belongs to the dihydroorotate dehydrogenase family. Type 1 subfamily. In terms of assembly, heterotetramer of 2 PyrK and 2 PyrD type B subunits. Requires FMN as cofactor.

It localises to the cytoplasm. It carries out the reaction (S)-dihydroorotate + NAD(+) = orotate + NADH + H(+). Its pathway is pyrimidine metabolism; UMP biosynthesis via de novo pathway; orotate from (S)-dihydroorotate (NAD(+) route): step 1/1. Its function is as follows. Catalyzes the conversion of dihydroorotate to orotate with NAD(+) as electron acceptor. The chain is Dihydroorotate dehydrogenase B (NAD(+)), catalytic subunit (pyrD) from Bacillus cytotoxicus (strain DSM 22905 / CIP 110041 / 391-98 / NVH 391-98).